Reading from the N-terminus, the 702-residue chain is Nucleolar and coiled-body phosphoprotein 1 (702 aa).

One can recognise a LisH domain in the interval 10–42 (VPSDLYPLVLRFLRDSQLSEVASKFAKATGATQ). N6-acetyllysine is present on Lys-33. Residues 65-635 (PKVKLQSNGP…SPFRRVREEE (571 aa)) form a disordered region. Residues Lys-68 and Lys-77 each participate in a glycyl lysine isopeptide (Lys-Gly) (interchain with G-Cter in SUMO2) cross-link. Acidic serine cluster repeat units follow at residues 85–96 (SSDSSEDSSEDE) and 130–141 (ESSSSEESSEEE). An 11 X 12 AA approximate repeats of an acidic serine cluster region spans residues 85–566 (SSDSSEDSSE…GKAAKESEEE (482 aa)). Ser-88 bears the Phosphoserine mark. Diphosphoserine occurs at positions 89 and 92. Phosphoserine; by CK2 is present on residues Ser-89 and Ser-92. At Ser-93 the chain carries Phosphoserine. 2 stretches are compositionally biased toward low complexity: residues 123–135 (KAAA…SSSE) and 151–164 (QQKA…AVRP). Residues 172-188 (SESDSDSDSDSSSEEET) are compositionally biased toward acidic residues. One copy of the Acidic serine cluster 3 repeat lies at 176-187 (SDSDSDSSSEEE). Low complexity-rich tracts occupy residues 189–205 (PQTQ…AQTK), 224–235 (KAAASSSSSSSS), 245–278 (AAPP…SSED), and 308–329 (LPKK…QPAD). Residues Lys-195 and Lys-201 each participate in a glycyl lysine isopeptide (Lys-Gly) (interchain with G-Cter in SUMO2) cross-link. The segment at 215–390 (KAQPKVANGK…EDEAPAKPVS (176 aa)) is interaction with RPA194. Acidic serine cluster repeat units lie at residues 232–241 (SSSSDDSEEE) and 273–284 (SSSSEDSSSEEE). A compositionally biased stretch (acidic residues) spans 330–342 (SSDDSSDDSDSSS). An Acidic serine cluster 6 repeat occupies 334-345 (SSDDSDSSSEEE). Glycyl lysine isopeptide (Lys-Gly) (interchain with G-Cter in SUMO2) cross-links involve residues Lys-351 and Lys-356. Low complexity predominate over residues 353–362 (VVSKTPAKAA). Ser-371, Ser-372, and Ser-375 each carry phosphoserine. The stretch at 372–383 (SDSSDSDSSEDE) is one Acidic serine cluster 7 repeat. Residues Lys-396, Lys-402, Lys-407, and Lys-413 each participate in a glycyl lysine isopeptide (Lys-Gly) (interchain with G-Cter in SUMO2) cross-link. Over residues 411–422 (TPKQPAGSNQKP) the composition is skewed to polar residues. Residue Lys-421 is modified to N6-acetyllysine; alternate. A Glycyl lysine isopeptide (Lys-Gly) (interchain with G-Cter in SUMO1); alternate cross-link involves residue Lys-421. Lys-421 is covalently cross-linked (Glycyl lysine isopeptide (Lys-Gly) (interchain with G-Cter in SUMO2); alternate). The stretch at 431-442 (SSEEESSSSEEE) is one Acidic serine cluster 8 repeat. The segment covering 431–443 (SSEEESSSSEEEE) has biased composition (acidic residues). Glycyl lysine isopeptide (Lys-Gly) (interchain with G-Cter in SUMO2) cross-links involve residues Lys-447 and Lys-459. Composition is skewed to low complexity over residues 447-480 (KSAT…SDSS) and 514-525 (KSSSSSSSSSSE). Acidic serine cluster repeat units follow at residues 474–484 (SSDSDSSSSEE) and 521–531 (SSSSEDSSEEE). A compositionally biased stretch (polar residues) spans 541–554 (PKIQASKANGTPAS). The Acidic serine cluster 11 repeat unit spans residues 555-566 (LNGKAAKESEEE). Ser-563 carries the phosphoserine modification. Positions 563-572 (SEEEEEEEET) are enriched in acidic residues. Lys-575 participates in a covalent cross-link: Glycyl lysine isopeptide (Lys-Gly) (interchain with G-Cter in SUMO1). Lys-582 is covalently cross-linked (Glycyl lysine isopeptide (Lys-Gly) (interchain with G-Cter in SUMO2)). Position 585 is a phosphoserine (Ser-585). Thr-594 bears the Phosphothreonine mark. A Glycyl lysine isopeptide (Lys-Gly) (interchain with G-Cter in SUMO2) cross-link involves residue Lys-607. Phosphothreonine is present on residues Thr-610 and Thr-613. Lys-616 is covalently cross-linked (Glycyl lysine isopeptide (Lys-Gly) (interchain with G-Cter in SUMO2)). Ser-625 and Ser-646 each carry phosphoserine. A Glycyl lysine isopeptide (Lys-Gly) (interchain with G-Cter in SUMO2) cross-link involves residue Lys-650. Lys-666 is modified (N6-acetyllysine; alternate). A Glycyl lysine isopeptide (Lys-Gly) (interchain with G-Cter in SUMO2); alternate cross-link involves residue Lys-666. The residue at position 686 (Arg-686) is an Omega-N-methylarginine. The residue at position 689 (Ser-689) is a Phosphoserine. Lys-698 participates in a covalent cross-link: Glycyl lysine isopeptide (Lys-Gly) (interchain with G-Cter in SUMO2). Ser-701 carries the phosphoserine modification.

It belongs to the NOLC1 family. Interacts with RNA polymerase I 194 kDa subunit (RPA194) and with casein kinase-II. Interacts with DKC1/NAP57, NOP58 and fibrillarin. In terms of processing, undergoes rapid and massive phosphorylation/dephosphorylation cycles on CK2 and PKC sites. NOLC1 is one of the mostly phosphorylated proteins in the cell. Pyrophosphorylated by 5-diphosphoinositol pentakisphosphate (5-IP7). Serine pyrophosphorylation is achieved by Mg(2+)-dependent, but enzyme independent transfer of a beta-phosphate from a inositol pyrophosphate to a pre-phosphorylated serine residue. Post-translationally, ubiquitinated. Monoubiquitination by the BCR(KBTBD8) complex promotes the formation of a NOLC1-TCOF1 complex that acts as a platform to connect RNA polymerase I with enzymes responsible for ribosomal processing and modification, leading to remodel the translational program of differentiating cells in favor of neural crest specification.

The protein localises to the nucleus. The protein resides in the nucleolus. Its subcellular location is the cytoplasm. Functionally, nucleolar protein that acts as a regulator of RNA polymerase I by connecting RNA polymerase I with enzymes responsible for ribosomal processing and modification. Required for neural crest specification: following monoubiquitination by the BCR(KBTBD8) complex, associates with TCOF1 and acts as a platform to connect RNA polymerase I with enzymes responsible for ribosomal processing and modification, leading to remodel the translational program of differentiating cells in favor of neural crest specification. Involved in nucleologenesis, possibly by playing a role in the maintenance of the fundamental structure of the fibrillar center and dense fibrillar component in the nucleolus. It has intrinsic GTPase and ATPase activities. This chain is Nucleolar and coiled-body phosphoprotein 1, found in Mus musculus (Mouse).